We begin with the raw amino-acid sequence, 352 residues long: Isoflavone-7-O-methyltransferase 9 (352 aa).

A substrate-binding site is contributed by 118-127; that stretch reads VLDPTLSGSY. Positions 196, 219, 239, 240, and 253 each coordinate S-adenosyl-L-methionine. Catalysis depends on histidine 257, which acts as the Proton acceptor.

Belongs to the class I-like SAM-binding methyltransferase superfamily. Cation-independent O-methyltransferase family. COMT subfamily. In terms of assembly, homodimer.

It catalyses the reaction a 7-hydroxyisoflavone + S-adenosyl-L-methionine = a 7-methoxyisoflavone + S-adenosyl-L-homocysteine + H(+). Its pathway is phytoalexin biosynthesis; medicarpin biosynthesis. Transfers a methyl group to 7-hydroxyls of the isoflavones daidzein, genistein and 6,7,4'-trihydroxyisoflavone. Can also methylate (+)6a-hydroxymaackiain with lower efficiency. This chain is Isoflavone-7-O-methyltransferase 9, found in Medicago sativa (Alfalfa).